We begin with the raw amino-acid sequence, 279 residues long: Polyamine aminopropyltransferase (279 aa).

The PABS domain maps to 4–237 (IEWYPRGYGV…SPWAFLVGIK (234 aa)). Q29 is a binding site for S-methyl-5'-thioadenosine. Residues H60 and D84 each contribute to the spermidine site. Residues E104 and 141 to 142 (DG) contribute to the S-methyl-5'-thioadenosine site. The Proton acceptor role is filled by D158. A spermidine-binding site is contributed by 158 to 161 (DSTD). Residue P165 participates in S-methyl-5'-thioadenosine binding.

This sequence belongs to the spermidine/spermine synthase family. In terms of assembly, homodimer or homotetramer.

The protein resides in the cytoplasm. It carries out the reaction S-adenosyl 3-(methylsulfanyl)propylamine + putrescine = S-methyl-5'-thioadenosine + spermidine + H(+). It participates in amine and polyamine biosynthesis; spermidine biosynthesis; spermidine from putrescine: step 1/1. Its function is as follows. Catalyzes the irreversible transfer of a propylamine group from the amino donor S-adenosylmethioninamine (decarboxy-AdoMet) to putrescine (1,4-diaminobutane) to yield spermidine. In Pyrococcus abyssi (strain GE5 / Orsay), this protein is Polyamine aminopropyltransferase.